A 159-amino-acid polypeptide reads, in one-letter code: SsrA-binding protein (159 aa).

Over residues 137 to 147 the composition is skewed to basic and acidic residues; the sequence is LAERQANRETE. The interval 137-159 is disordered; the sequence is LAERQANRETEQAVGRRLKGMHD.

The protein belongs to the SmpB family.

The protein localises to the cytoplasm. Its function is as follows. Required for rescue of stalled ribosomes mediated by trans-translation. Binds to transfer-messenger RNA (tmRNA), required for stable association of tmRNA with ribosomes. tmRNA and SmpB together mimic tRNA shape, replacing the anticodon stem-loop with SmpB. tmRNA is encoded by the ssrA gene; the 2 termini fold to resemble tRNA(Ala) and it encodes a 'tag peptide', a short internal open reading frame. During trans-translation Ala-aminoacylated tmRNA acts like a tRNA, entering the A-site of stalled ribosomes, displacing the stalled mRNA. The ribosome then switches to translate the ORF on the tmRNA; the nascent peptide is terminated with the 'tag peptide' encoded by the tmRNA and targeted for degradation. The ribosome is freed to recommence translation, which seems to be the essential function of trans-translation. This is SsrA-binding protein from Nocardioides sp. (strain ATCC BAA-499 / JS614).